Reading from the N-terminus, the 105-residue chain is Large ribosomal subunit protein uL24 (105 aa).

Belongs to the universal ribosomal protein uL24 family. In terms of assembly, part of the 50S ribosomal subunit.

In terms of biological role, one of two assembly initiator proteins, it binds directly to the 5'-end of the 23S rRNA, where it nucleates assembly of the 50S subunit. Functionally, one of the proteins that surrounds the polypeptide exit tunnel on the outside of the subunit. This chain is Large ribosomal subunit protein uL24, found in Methylobacterium sp. (strain 4-46).